A 331-amino-acid polypeptide reads, in one-letter code: D-lactate dehydrogenase (331 aa).

NAD(+) contacts are provided by residues 156–157 (RI), Asp-176, 206–207 (MP), 233–235 (TAR), and Asp-259. Arg-235 is an active-site residue. Glu-264 is an active-site residue. The Proton donor role is filled by His-296.

The protein belongs to the D-isomer specific 2-hydroxyacid dehydrogenase family.

The enzyme catalyses (R)-lactate + NAD(+) = pyruvate + NADH + H(+). This chain is D-lactate dehydrogenase (ldhD), found in Treponema pallidum (strain Nichols).